The following is a 498-amino-acid chain: uncharacterized protein (498 aa).

3 disordered regions span residues 1 to 48 (MSND…ARPK), 99 to 134 (NDLHPLDNDSTRTSKTLKNSSEVLTASKLTDEGNSK), and 190 to 209 (NSENSNVNNGSSLNGNTSSN). A compositionally biased stretch (polar residues) spans 35–44 (ELSTPKQVNQ). Over residues 99-110 (NDLHPLDNDSTR) the composition is skewed to basic and acidic residues. Over residues 111–126 (TSKTLKNSSEVLTASK) the composition is skewed to polar residues.

This is an uncharacterized protein from Schizosaccharomyces pombe (strain 972 / ATCC 24843) (Fission yeast).